Reading from the N-terminus, the 378-residue chain is WUSCHEL-related homeobox 9 (378 aa).

Disordered regions lie at residues 1–60 and 123–173; these read MASS…NPKP and KHSL…GSQM. The segment covering 32-42 has biased composition (low complexity); that stretch reads SASHRSSPFSS. Over residues 45–54 the composition is skewed to basic and acidic residues; that stretch reads EVERSPEPKP. A DNA-binding region (homeobox; WUS-type) is located at residues 51–115; that stretch reads EPKPRWNPKP…NRKSRSKHKL (65 aa). Composition is skewed to low complexity over residues 137 to 152 and 161 to 171; these read PSAS…SSKS and KNNTNLSLGGS.

Belongs to the WUS homeobox family. In terms of tissue distribution, expressed in the basal cell and later at the boundary between suspensor and proembryo. Expressed at low levels in proliferating tissues post embryonically. Detected in vegetative shoot apical meristem, leaf primordia, floral meristems, emerging floral organs, epidermal layer of the placenta and in the upper portion of the root meristematic zone.

It is found in the nucleus. The protein resides in the cytoplasm. Homeodomain transcription factor required for meristem growth and early development. Promotes cell proliferation and prevents premature differentiation in meristematic tissues during postembryonic development. Essential for maintaining tissue growth during embryogenesis. May act by repressing TSS to promote meristematic proliferation. Involved in the transcriptional activation of a subset of cytokinin response factors. May act as a negative regulator of cytokinin signaling in the dark. The protein is WUSCHEL-related homeobox 9 of Arabidopsis thaliana (Mouse-ear cress).